The chain runs to 652 residues: Probable endo-1,3(4)-beta-glucanase AFUB_029980 (652 aa).

Residues 1–21 (MAPSSLLLSVGSLITSSLVSA) form the signal peptide. In terms of domain architecture, GH16 spans 36–289 (ESWQGESFIN…WAGNVFAEST (254 aa)). N-linked (GlcNAc...) asparagine glycosylation occurs at asparagine 64. Residue glutamate 145 is the Nucleophile of the active site. Glutamate 150 serves as the catalytic Proton donor. 2 N-linked (GlcNAc...) asparagine glycosylation sites follow: asparagine 200 and asparagine 208. The interval 379-423 (NTVATSAADHATPSSAETTTVPAATGAPSVSATEGGDSELESTST) is disordered. Polar residues predominate over residues 390 to 410 (TPSSAETTTVPAATGAPSVSA). Residue asparagine 453 is glycosylated (N-linked (GlcNAc...) asparagine). A disordered region spans residues 509-551 (SEIPTAPPEPVSQAVSTGSFDDSDTAQGDSEEQGSIASASVAP). The segment covering 529–540 (DDSDTAQGDSEE) has biased composition (acidic residues). Asparagine 630 is lipidated: GPI-anchor amidated asparagine. Residues 631–652 (GANRMSVGLSGLIGVMFIAALA) constitute a propeptide, removed in mature form.

Belongs to the glycosyl hydrolase 16 family.

It is found in the cell membrane. It carries out the reaction Endohydrolysis of (1-&gt;3)- or (1-&gt;4)-linkages in beta-D-glucans when the glucose residue whose reducing group is involved in the linkage to be hydrolyzed is itself substituted at C-3.. In terms of biological role, mixed-linked glucanase involved in the degradation of complex natural cellulosic substrates. This is Probable endo-1,3(4)-beta-glucanase AFUB_029980 from Aspergillus fumigatus (strain CBS 144.89 / FGSC A1163 / CEA10) (Neosartorya fumigata).